The chain runs to 253 residues: Probable U3 small nucleolar RNA-associated protein 11 (253 aa).

Residues 1-21 form a disordered region; sequence MAAAFRKAVKSRQREYRERSQ. Residues lysine 74, lysine 83, and lysine 86 each participate in a glycyl lysine isopeptide (Lys-Gly) (interchain with G-Cter in SUMO2) cross-link. At threonine 90 the chain carries Phosphothreonine. Residues lysine 103, lysine 120, lysine 143, lysine 144, lysine 180, lysine 211, lysine 218, lysine 235, and lysine 236 each participate in a glycyl lysine isopeptide (Lys-Gly) (interchain with G-Cter in SUMO2) cross-link. A Phosphoserine modification is found at serine 241. Lysine 246 participates in a covalent cross-link: Glycyl lysine isopeptide (Lys-Gly) (interchain with G-Cter in SUMO2).

This sequence belongs to the UTP11 family. As to quaternary structure, part of the small subunit (SSU) processome, composed of more than 70 proteins and the RNA chaperone small nucleolar RNA (snoRNA) U3.

The protein localises to the nucleus. It is found in the nucleolus. Its function is as follows. Part of the small subunit (SSU) processome, first precursor of the small eukaryotic ribosomal subunit. During the assembly of the SSU processome in the nucleolus, many ribosome biogenesis factors, an RNA chaperone and ribosomal proteins associate with the nascent pre-rRNA and work in concert to generate RNA folding, modifications, rearrangements and cleavage as well as targeted degradation of pre-ribosomal RNA by the RNA exosome. Involved in nucleolar processing of pre-18S ribosomal RNA. This chain is Probable U3 small nucleolar RNA-associated protein 11, found in Rattus norvegicus (Rat).